A 277-amino-acid chain; its full sequence is Large ribosomal subunit protein uL2 (277 aa).

Disordered regions lie at residues 36 to 55 (PLPKRAGRNNQGKLTVRHHG) and 213 to 277 (WKGI…RKKK).

It belongs to the universal ribosomal protein uL2 family. Part of the 50S ribosomal subunit. Forms a bridge to the 30S subunit in the 70S ribosome.

Functionally, one of the primary rRNA binding proteins. Required for association of the 30S and 50S subunits to form the 70S ribosome, for tRNA binding and peptide bond formation. It has been suggested to have peptidyltransferase activity; this is somewhat controversial. Makes several contacts with the 16S rRNA in the 70S ribosome. This chain is Large ribosomal subunit protein uL2, found in Staphylococcus saprophyticus subsp. saprophyticus (strain ATCC 15305 / DSM 20229 / NCIMB 8711 / NCTC 7292 / S-41).